A 1337-amino-acid polypeptide reads, in one-letter code: Protein HEG homolog 1 (1337 aa).

The signal sequence occupies residues 1–31 (MATPRAPRWPPPSLLLLLLLPLLLLPPAAPG). Composition is skewed to low complexity over residues 28–40 (AAPGARGSLPSPA) and 54–66 (PGAGHTAPGPGVA). Disordered regions lie at residues 28–149 (AAPG…SNMA), 175–211 (SSLLSLESLPESPSSSRSQRRITPSQTESGTSLGFLE), 235–296 (ASHP…QNPS), 313–675 (VPRT…PSPI), 723–767 (LIPS…TVSL), and 860–909 (EGNR…PQTT). Residues 32–1204 (ARGSLPSPAH…GLNCGNPYQL (1173 aa)) are Extracellular-facing. Positions 118–131 (TAQNARMSHSSSEG) are enriched in polar residues. Residues 175–190 (SSLLSLESLPESPSSS) are compositionally biased toward low complexity. Polar residues-rich tracts occupy residues 195 to 206 (RITPSQTESGTS), 247 to 258 (VLSQKRNSSGQE), 283 to 296 (IKNGNNFTALQNPS), and 340 to 361 (GITSMSVRSSPSVKDSRTNSGL). The span at 470-480 (RGGGEDSGMGG) shows a compositional bias: gly residues. Composition is skewed to low complexity over residues 486 to 502 (SSSSSSSTSSSESLDSS) and 556 to 575 (SYSEASESSTSSVKISDSPS). Composition is skewed to polar residues over residues 576-585 (QAQPKQSSMS) and 592-617 (AQSSTESPVLHTSNLPTYTSTVNMPN). A compositionally biased stretch (low complexity) spans 637-675 (PSTQPSPSQPQPFSSALPSTRSPGSTSETTTSSPSPSPI). Composition is skewed to polar residues over residues 725 to 742 (PSNQTANPKNQSTPQQEK) and 751 to 763 (SLVSPPTDSTKAV). Residues 868-884 (PTTQPIPLTTSTTSAGE) show a composition bias toward low complexity. Over residues 885-896 (RTTELGRAEESS) the composition is skewed to basic and acidic residues. The segment covering 897–909 (PSHFLTPSSPQTT) has biased composition (polar residues). The EGF-like 1 domain maps to 941-979 (PVNSCTVNPCLHDGKCIVDLTGRGYRCVCPPAWQGENCS). 6 cysteine pairs are disulfide-bonded: cysteine 945–cysteine 956, cysteine 950–cysteine 967, cysteine 969–cysteine 978, cysteine 985–cysteine 996, cysteine 990–cysteine 1005, and cysteine 1007–cysteine 1018. One can recognise an EGF-like 2; calcium-binding domain in the interval 981-1019 (DVNECLSSPCPPLATCNNTQGSFTCRCPVGYQLEKGICN). N-linked (GlcNAc...) asparagine glycosylation is present at asparagine 1093. A helical transmembrane segment spans residues 1205–1225 (ITVVIAAAGGGLLLILGVALI). The Cytoplasmic portion of the chain corresponds to 1226–1337 (VTCCRKSKND…SDESRRRDYF (112 aa)). Serine 1315 is subject to Phosphoserine.

In terms of assembly, interacts with CCM2 and KRIT1; KRIT1 markedly facilitates interaction with CCM2.

It is found in the cell membrane. It localises to the cell junction. Its function is as follows. Receptor component of the CCM signaling pathway which is a crucial regulator of heart and vessel formation and integrity. May be acting by stabilizing endothelial cell junctions. This chain is Protein HEG homolog 1 (Heg1), found in Mus musculus (Mouse).